The sequence spans 87 residues: Small ribosomal subunit protein bS18 (87 aa).

Over residues 1 to 10 the composition is skewed to basic and acidic residues; the sequence is MAGKSSGDRR. Residues 1 to 23 form a disordered region; the sequence is MAGKSSGDRRKPLRGAKGGKNAA.

Belongs to the bacterial ribosomal protein bS18 family. In terms of assembly, part of the 30S ribosomal subunit. Forms a tight heterodimer with protein bS6.

Functionally, binds as a heterodimer with protein bS6 to the central domain of the 16S rRNA, where it helps stabilize the platform of the 30S subunit. This is Small ribosomal subunit protein bS18 from Clavibacter michiganensis subsp. michiganensis (strain NCPPB 382).